Reading from the N-terminus, the 851-residue chain is MRSLLVFRKIPSRIRLRNLRNNKPFCSQSQFPKESENPSQEQRLLVYGSTSEENPVTSKVSLLSAKPEQKDDASVIDVLLNRRNNPEAALRFYNWARPWRGSFEDGDVFWVLIHILVSSPETYGRASDLLIRYVSTSNPTPMASVLVSKLVDSAKSFGFEVNSRAFNYLLNAYSKDRQTDHAVDIVNQMLELDVIPFFPYVNRTLSALVQRNSLTEAKELYSRMVAIGVDGDNVTTQLLMRASLREEKPAEALEVLSRAIERGAEPDSLLYSLAVQACCKTLDLAMANSLLREMKEKKLCVPSQETYTSVILASVKQGNMDDAIRLKDEMLSDGISMNVVAATSLITGHCKNNDLVSALVLFDKMEKEGPSPNSVTFSVLIEWFRKNGEMEKALEFYKKMEVLGLTPSVFHVHTIIQGWLKGQKHEEALKLFDESFETGLANVFVCNTILSWLCKQGKTDEATELLSKMESRGIGPNVVSYNNVMLGHCRQKNMDLARIVFSNILEKGLKPNNYTYSILIDGCFRNHDEQNALEVVNHMTSSNIEVNGVVYQTIINGLCKVGQTSKARELLANMIEEKRLCVSCMSYNSIIDGFFKEGEMDSAVAAYEEMCGNGISPNVITYTSLMNGLCKNNRMDQALEMRDEMKNKGVKLDIPAYGALIDGFCKRSNMESASALFSELLEEGLNPSQPIYNSLISGFRNLGNMVAALDLYKKMLKDGLRCDLGTYTTLIDGLLKDGNLILASELYTEMQAVGLVPDEIIYTVIVNGLSKKGQFVKVVKMFEEMKKNNVTPNVLIYNAVIAGHYREGNLDEAFRLHDEMLDKGILPDGATFDILVSGQVGNLQPVRAASL.

The N-terminal 26 residues, 1–26, are a transit peptide targeting the mitochondrion; that stretch reads MRSLLVFRKIPSRIRLRNLRNNKPFC. 19 PPR repeats span residues 162–196, 197–231, 232–266, 267–301, 303–337, 338–372, 373–407, 408–438, 442–476, 477–511, 512–546, 547–577, 583–617, 618–652, 653–687, 688–722, 723–757, 758–792, and 793–827; these read NSRA…DVIP, FFPY…GVDG, DNVT…GAEP, DSLL…KLCV, SQET…GISM, NVVA…GPSP, NSVT…GLTP, SVFH…SFET, NVFV…GIGP, NVVS…GLKP, NNYT…NIEV, NGVV…MIEE, SCMS…GISP, NVIT…GVKL, DIPA…GLNP, SQPI…GLRC, DLGT…GLVP, DEII…NVTP, and NVLI…GILP.

Belongs to the PPR family. P subfamily.

Its subcellular location is the mitochondrion. This Arabidopsis thaliana (Mouse-ear cress) protein is Pentatricopeptide repeat-containing protein At3g54980, mitochondrial.